The sequence spans 350 residues: Biotin synthase (350 aa).

One can recognise a Radical SAM core domain in the interval 38–256 (NHVQVSTLLS…IAIARIMMPQ (219 aa)). The [4Fe-4S] cluster site is built by Cys53, Cys57, and Cys60. Positions 97, 128, 188, and 260 each coordinate [2Fe-2S] cluster.

It belongs to the radical SAM superfamily. Biotin synthase family. As to quaternary structure, homodimer. The cofactor is [4Fe-4S] cluster. Requires [2Fe-2S] cluster as cofactor.

It carries out the reaction (4R,5S)-dethiobiotin + (sulfur carrier)-SH + 2 reduced [2Fe-2S]-[ferredoxin] + 2 S-adenosyl-L-methionine = (sulfur carrier)-H + biotin + 2 5'-deoxyadenosine + 2 L-methionine + 2 oxidized [2Fe-2S]-[ferredoxin]. It participates in cofactor biosynthesis; biotin biosynthesis; biotin from 7,8-diaminononanoate: step 2/2. Functionally, catalyzes the conversion of dethiobiotin (DTB) to biotin by the insertion of a sulfur atom into dethiobiotin via a radical-based mechanism. In Vibrio parahaemolyticus serotype O3:K6 (strain RIMD 2210633), this protein is Biotin synthase.